The primary structure comprises 517 residues: GMP synthase [glutamine-hydrolyzing] (517 aa).

The Glutamine amidotransferase type-1 domain maps to 9–199; the sequence is RILILDFGSQ…VLNACGCEGL (191 aa). Catalysis depends on Cys-86, which acts as the Nucleophile. Residues His-173 and Glu-175 contribute to the active site. The region spanning 200–392 is the GMPS ATP-PPase domain; sequence WTSASIIEDA…LGLPYNMLYR (193 aa). 227-233 contacts ATP; sequence SGGVDSS.

Homodimer.

It carries out the reaction XMP + L-glutamine + ATP + H2O = GMP + L-glutamate + AMP + diphosphate + 2 H(+). It participates in purine metabolism; GMP biosynthesis; GMP from XMP (L-Gln route): step 1/1. Its function is as follows. Catalyzes the synthesis of GMP from XMP. This chain is GMP synthase [glutamine-hydrolyzing], found in Vibrio atlanticus (strain LGP32) (Vibrio splendidus (strain Mel32)).